The following is a 334-amino-acid chain: N-acetyl-gamma-glutamyl-phosphate reductase (334 aa).

Cys-154 is a catalytic residue.

Belongs to the NAGSA dehydrogenase family. Type 1 subfamily.

It is found in the cytoplasm. The enzyme catalyses N-acetyl-L-glutamate 5-semialdehyde + phosphate + NADP(+) = N-acetyl-L-glutamyl 5-phosphate + NADPH + H(+). Its pathway is amino-acid biosynthesis; L-arginine biosynthesis; N(2)-acetyl-L-ornithine from L-glutamate: step 3/4. Functionally, catalyzes the NADPH-dependent reduction of N-acetyl-5-glutamyl phosphate to yield N-acetyl-L-glutamate 5-semialdehyde. In Escherichia coli O157:H7, this protein is N-acetyl-gamma-glutamyl-phosphate reductase.